Consider the following 598-residue polypeptide: DNA mismatch repair protein MutL (598 aa).

The protein belongs to the DNA mismatch repair MutL/HexB family.

Its function is as follows. This protein is involved in the repair of mismatches in DNA. It is required for dam-dependent methyl-directed DNA mismatch repair. May act as a 'molecular matchmaker', a protein that promotes the formation of a stable complex between two or more DNA-binding proteins in an ATP-dependent manner without itself being part of a final effector complex. This Thiobacillus denitrificans (strain ATCC 25259 / T1) protein is DNA mismatch repair protein MutL.